A 465-amino-acid polypeptide reads, in one-letter code: tRNA-2-methylthio-N(6)-dimethylallyladenosine synthase (465 aa).

One can recognise an MTTase N-terminal domain in the interval 5–125 (RKLHIKSFGC…LPELLEKARR (121 aa)). [4Fe-4S] cluster contacts are provided by Cys14, Cys50, Cys88, Cys166, Cys170, and Cys173. Residues 152-382 (RARGVSAFVT…QLQGLIDSQQ (231 aa)) enclose the Radical SAM core domain. A TRAM domain is found at 387 to 449 (RASIGTTVDV…RYSLIGELVK (63 aa)).

It belongs to the methylthiotransferase family. MiaB subfamily. As to quaternary structure, monomer. The cofactor is [4Fe-4S] cluster.

It localises to the cytoplasm. It catalyses the reaction N(6)-dimethylallyladenosine(37) in tRNA + (sulfur carrier)-SH + AH2 + 2 S-adenosyl-L-methionine = 2-methylsulfanyl-N(6)-dimethylallyladenosine(37) in tRNA + (sulfur carrier)-H + 5'-deoxyadenosine + L-methionine + A + S-adenosyl-L-homocysteine + 2 H(+). Functionally, catalyzes the methylthiolation of N6-(dimethylallyl)adenosine (i(6)A), leading to the formation of 2-methylthio-N6-(dimethylallyl)adenosine (ms(2)i(6)A) at position 37 in tRNAs that read codons beginning with uridine. The protein is tRNA-2-methylthio-N(6)-dimethylallyladenosine synthase of Rhodopseudomonas palustris (strain BisA53).